The chain runs to 460 residues: Serine hydroxymethyltransferase, cytosolic (460 aa).

The residue at position 244 (Lys-244) is an N6-(pyridoxal phosphate)lysine.

This sequence belongs to the SHMT family. Homotetramer. The cofactor is pyridoxal 5'-phosphate.

Its subcellular location is the cytoplasm. It carries out the reaction (6R)-5,10-methylene-5,6,7,8-tetrahydrofolate + glycine + H2O = (6S)-5,6,7,8-tetrahydrofolate + L-serine. The protein operates within one-carbon metabolism; tetrahydrofolate interconversion. Interconversion of serine and glycine. This chain is Serine hydroxymethyltransferase, cytosolic (SHMT-1), found in Encephalitozoon cuniculi (strain GB-M1) (Microsporidian parasite).